The following is a 490-amino-acid chain: UDP-N-acetylmuramate--L-alanine ligase (490 aa).

126–132 (GTHGKTT) lines the ATP pocket.

It belongs to the MurCDEF family.

Its subcellular location is the cytoplasm. The enzyme catalyses UDP-N-acetyl-alpha-D-muramate + L-alanine + ATP = UDP-N-acetyl-alpha-D-muramoyl-L-alanine + ADP + phosphate + H(+). It participates in cell wall biogenesis; peptidoglycan biosynthesis. Cell wall formation. In Baumannia cicadellinicola subsp. Homalodisca coagulata, this protein is UDP-N-acetylmuramate--L-alanine ligase.